The chain runs to 934 residues: MQRYELIRLIGKGGMGEVYLAHDKACSRRVALKRIREDLSGNALLRKRFLREAKIAADLIHPGIVPVYSICSDGEAVYYTMPYIEGFSLKSLLKSVWQKEVLSKELEEKTSVKSFLPIFDKICATVEYIHSKGVLHRDLKPDNILLGLFGEVVIVDWGAAIFKHAKELKLEQDDEAAVSFDERNICYSSMTIPGKIVGTPDYMAPESLLGVEASEKTDIYALGLILYQMLTLAFPYRRKKGRKLSYRDVVLPPIEMSPYREIPPSLSQIAMKAIAINPADRFSSIQELRQALQPYLQGDPEWTVKATLMAKEKSCWKYYDPILLSRYFPVLASSPAQWYNFMLSEVEISASTRVEYTVTKSAVHEGMGILFLPSKEAERGEFYCGYGLWFSVQNHELTVSLIKNGIEIQKKSQEMISQQYRFAILIEKSDNRIAVFVEQALFILHIDYLPSLGNRLGVIIQDLQGMSNIAISESIGALRVSCLAVPDAFLSEKLYDQAAIFYRKIRDSFPGRKESYEAQFRLGVTLLTQIEEQGGDLTQALSSFDYLHGGAGAPLEYLGKALVYQRNGSFVEEIRCLLFALKRYSQHPEIPRLEDHLCFRLYDSLHKHRSEALVFMLLILWIAPEKISVREEKRFLRIIYHKQQATLFCQVDKAPLQFRSSKMELFLSFWTGFSLFLPELFRRAGELRDYQALADIFYVAGVSGNREAFMQFSTALANVSDEITFPESLHNQKVAELMFFVKGVEALRNKDYQKAKKLLWKTPFTLQLYALDIFHIQAFLDEEIESFIDLLQAIYDPASEEERDHILVYIIQTHLWNRDLERAYKLLNDRFPLDEELAEYSEAFILWGCYLALTGDRVAVKAHFSRCRYKYGKSALIGKCVDGDIFDYLDNLVWWEKKMTLFQSYFLLRCLNESPRRYEKYRQAYLSMENNFFD.

Residues 4–296 form the Protein kinase domain; it reads YELIRLIGKG…ELRQALQPYL (293 aa). Residues 10–18 and lysine 33 contribute to the ATP site; that span reads IGKGGMGEV. The active-site Proton acceptor is aspartate 138.

It belongs to the protein kinase superfamily. Ser/Thr protein kinase family. Interacts with Pkn1. Post-translationally, autophosphorylated on serine and threonine residues. Present in elementary bodies 40 hours post-infection as 2 bands of approximately 55 to 60 and 45 to 50 kDa, which may be due to differential phosphorylation as well as degradation; an enzymatically active full-length protein can also be detected.

The enzyme catalyses L-seryl-[protein] + ATP = O-phospho-L-seryl-[protein] + ADP + H(+). It carries out the reaction L-threonyl-[protein] + ATP = O-phospho-L-threonyl-[protein] + ADP + H(+). Functionally, together with the serine/threonine kinase Pkn1, may play a role in the specific interactions with host proteins during intracellular growth. Autophosphorylates and also phosphorylates Pkn1. In Chlamydia trachomatis serovar L2 (strain ATCC VR-902B / DSM 19102 / 434/Bu), this protein is Serine/threonine-protein kinase PknD.